A 642-amino-acid chain; its full sequence is Threonine--tRNA ligase (642 aa).

Residues 1 to 61 enclose the TGS domain; it reads MPVITLPDGS…SEDANLVIFT (61 aa). The interval 243 to 534 is catalytic; the sequence is DHRKLAKKFD…LIEHYEGSFP (292 aa). C334, H385, and H511 together coordinate Zn(2+).

Belongs to the class-II aminoacyl-tRNA synthetase family. As to quaternary structure, homodimer. Requires Zn(2+) as cofactor.

The protein resides in the cytoplasm. The catalysed reaction is tRNA(Thr) + L-threonine + ATP = L-threonyl-tRNA(Thr) + AMP + diphosphate + H(+). In terms of biological role, catalyzes the attachment of threonine to tRNA(Thr) in a two-step reaction: L-threonine is first activated by ATP to form Thr-AMP and then transferred to the acceptor end of tRNA(Thr). Also edits incorrectly charged L-seryl-tRNA(Thr). The protein is Threonine--tRNA ligase of Cellvibrio japonicus (strain Ueda107) (Pseudomonas fluorescens subsp. cellulosa).